A 55-amino-acid chain; its full sequence is Large ribosomal subunit protein bL33 (55 aa).

This sequence belongs to the bacterial ribosomal protein bL33 family.

The protein is Large ribosomal subunit protein bL33 of Baumannia cicadellinicola subsp. Homalodisca coagulata.